Here is a 151-residue protein sequence, read N- to C-terminus: Ribonuclease H (151 aa).

The RNase H type-1 domain occupies 2-143; the sequence is SSNVIEIYAD…ADALANKGVD (142 aa). Mg(2+) contacts are provided by Asp-11, Glu-49, Asp-71, and Asp-135.

The protein belongs to the RNase H family. Monomer. It depends on Mg(2+) as a cofactor.

The protein localises to the cytoplasm. The enzyme catalyses Endonucleolytic cleavage to 5'-phosphomonoester.. Functionally, endonuclease that specifically degrades the RNA of RNA-DNA hybrids. The polypeptide is Ribonuclease H (Methylobacillus flagellatus (strain ATCC 51484 / DSM 6875 / VKM B-1610 / KT)).